Reading from the N-terminus, the 84-residue chain is Large ribosomal subunit protein uL23 (84 aa).

This sequence belongs to the universal ribosomal protein uL23 family. Part of the 50S ribosomal subunit. Contacts protein L29.

Binds to 23S rRNA. One of the proteins that surrounds the polypeptide exit tunnel on the outside of the ribosome. The chain is Large ribosomal subunit protein uL23 from Halobacterium salinarum (strain ATCC 700922 / JCM 11081 / NRC-1) (Halobacterium halobium).